The chain runs to 138 residues: MTQMTVQVVTPDGIKYDHHAKFISVTTPDGEMGILPNHINVIAPLQVHEMKIRRVSEDDRVDWVAINGGIIEIKDNVVTIVADSAERDRDIDVSRAERAKLRAERDIAEAETTHDINEVQRAKVALRRALNRINVSKK.

This sequence belongs to the ATPase epsilon chain family. In terms of assembly, F-type ATPases have 2 components, CF(1) - the catalytic core - and CF(0) - the membrane proton channel. CF(1) has five subunits: alpha(3), beta(3), gamma(1), delta(1), epsilon(1). CF(0) has three main subunits: a, b and c.

It localises to the cell membrane. In terms of biological role, produces ATP from ADP in the presence of a proton gradient across the membrane. This Streptococcus equi subsp. zooepidemicus (strain H70) protein is ATP synthase epsilon chain.